The chain runs to 127 residues: MKVLENLVYTKTHEWVRFEDETTALVGLTDYAQQTLGQLVFVNLPQEGDETVTGESFADVESVKAVSDVYCPVTGVVSEINEELLDAPEKINDTPYEAWFAKITDITEKEEFLSPEEYEEFVKKEME.

Positions 23-104 (TALVGLTDYA…PYEAWFAKIT (82 aa)) constitute a Lipoyl-binding domain. K64 carries the N6-lipoyllysine modification.

It belongs to the GcvH family. As to quaternary structure, the glycine cleavage system is composed of four proteins: P, T, L and H. It depends on (R)-lipoate as a cofactor.

Its function is as follows. The glycine cleavage system catalyzes the degradation of glycine. The H protein shuttles the methylamine group of glycine from the P protein to the T protein. The protein is Glycine cleavage system H protein of Lachnoclostridium phytofermentans (strain ATCC 700394 / DSM 18823 / ISDg) (Clostridium phytofermentans).